The primary structure comprises 198 residues: Nucleoside triphosphate pyrophosphatase (198 aa).

Asp72 functions as the Proton acceptor in the catalytic mechanism.

Belongs to the Maf family. A divalent metal cation serves as cofactor.

The protein resides in the cytoplasm. The enzyme catalyses a ribonucleoside 5'-triphosphate + H2O = a ribonucleoside 5'-phosphate + diphosphate + H(+). The catalysed reaction is a 2'-deoxyribonucleoside 5'-triphosphate + H2O = a 2'-deoxyribonucleoside 5'-phosphate + diphosphate + H(+). Its function is as follows. Nucleoside triphosphate pyrophosphatase. May have a dual role in cell division arrest and in preventing the incorporation of modified nucleotides into cellular nucleic acids. The chain is Nucleoside triphosphate pyrophosphatase from Corynebacterium diphtheriae (strain ATCC 700971 / NCTC 13129 / Biotype gravis).